Here is a 1461-residue protein sequence, read N- to C-terminus: MASKMPEGSPPTSRSIQSRNSSYSTSSNERIGTPSTISLSENSDLSKLQSTNDFESREDLSLTSDDNNDPEYVMCYNTVYHQKTKINDKLLSETEQLRKIYPLESRVFPKPTIVKEITNERTKRYTFYDDDAPLTNQHTVLDEATYNRILKRIDFFIEKVVEVPPTYHFLSLLNVQLRIQPIWWMDEFAERNGIESLLSALRNLGHYPERASKTPLESQIIQSLFHCLNSENCRRRYQSSAKCSVPGFNALGTIAETVLSKSLNSARMATFLLKFLCNKKGLSYFKAVIRAFEWLVEQKLSKTRFSAWMHSFNDVITGVRVCADSSPQAIVHMDEFEDTDCLIDYLVATLALIRDLCAAPPDLQLRCALRHELLSAGLQKAIDSLLKWRNRHVRDALQLLIKEHNADARRFRSGSDVNNVDRKCVKKQMNYREESHTPHGNTTRKTSTPVSNNRPTTPEQQAVWDVFQRIYTRFTGSEGSKESFIKLLEYFVTEPDNGKIQKSMQLLTHTLEALEGFKTAKADTNVGLTILSQRLLDKLGTAEEIAEYKTKYNGAMLENKHLKEQVESMLSQLNVGPRDPMQFLKKQLDELKAELNLRDNLLASMQREFETRYRAQIQAYNKLQSQMEHVQNSNEQHLQPGLLNKVSKSFDSVHRRNLSQDSLDAMTEQFSYHVEPNILSGSGIPVRVHTPSKTEDLDESFSGSEISSSPSPLLPDVSDTVEEQQKLLLKSPPPPPPAVIVPTPAPAPIPVPPPAPIMGGPPPPPPPPGVAGAGPPPPPPPPPAVSAGGSRYYAPAPQAEPEPKIDETSLTEEQKIQLEEARKQRKAADDAARAAIEKYTSIPSLRDLHKPTRPLKRVHWQRVDPLPGPNVFTKFCLNFDITAKVFIDNGLLDFLDEKFDNTPREDFVAVEISDQRSSLLPDTVEQNMAIILRSVSNMPVEDLVQKFLVEPDFLPASILYFDRASLASTNAYTDPFIPYSTDYTKKNPKEPTADVNSLSYFEKFFVLFVVNLRHYFQERMKALKFRSTLFGDLEILEVRMKEVIDTSDSIMEDKNFAEFFQVLLIIGNYFNEPYDRASAFSLYMIYRLETLRDSSSALTLMHYFDEIIRTRFPELLQAESTFKKIQSVSGYNIDAMVAGVDGAYDEFCDFQTSLKDGALSKCDQHHPDDKAYDILSEWLPEAKERIRNIKKLKTDMLTKLENTVKYLCEYDSIDKVRNSFFKNLNSFYEMYSIAKAENEERFEKEKRRIMSEDRDKLIRGRQKTSIVAKYRNKRELPEDSDDKQDTASKDKNSLETIDEKMEDASKIEGDAKTGDDNEMEDLDKMEDLEKPDYAEEKDPYITVMSELRSRIQNVPKRTVTVYSDEGVATLEPGAQGDDVVDKAKMILEKMEGHSQLLTSSANPDEEVLRAKLKAAERLQKPAIPRTRRKGHTEPKSAKSLLAELTNGSNASNLVENDRQKQ.

Disordered stretches follow at residues 1-67 and 431-457; these read MASK…SDDN and YREESHTPHGNTTRKTSTPVSNNRPTT. Residues 12–28 are compositionally biased toward low complexity; that stretch reads TSRSIQSRNSSYSTSSN. 2 stretches are compositionally biased toward polar residues: residues 29 to 53 and 438 to 457; these read ERIGTPSTISLSENSDLSKLQSTND and PHGNTTRKTSTPVSNNRPTT. The GBD/FH3 domain maps to 92-508; that stretch reads SETEQLRKIY…KIQKSMQLLT (417 aa). Positions 137–515 are interaction with tea4; it reads QHTVLDEATY…LLTHTLEALE (379 aa). A coiled-coil region spans residues 540–639; it reads GTAEEIAEYK…VQNSNEQHLQ (100 aa). Positions 683-811 are disordered; sequence GIPVRVHTPS…EPKIDETSLT (129 aa). Low complexity predominate over residues 700-718; it reads SFSGSEISSSPSPLLPDVS. The segment covering 731 to 784 has biased composition (pro residues); it reads SPPPPPPAVIVPTPAPAPIPVPPPAPIMGGPPPPPPPPGVAGAGPPPPPPPPPA. The span at 801–811 shows a compositional bias: basic and acidic residues; sequence PEPKIDETSLT. Residues 845 to 1257 form the FH2 domain; that stretch reads LRDLHKPTRP…RIMSEDRDKL (413 aa). Disordered regions lie at residues 1268–1337 and 1416–1461; these read AKYR…AEEK and ERLQ…RQKQ. 2 stretches are compositionally biased toward basic and acidic residues: residues 1273-1315 and 1325-1337; these read KREL…KTGD and MEDLEKPDYAEEK. Residues 1445 to 1454 are compositionally biased toward polar residues; it reads TNGSNASNLV.

Belongs to the formin homology family. Interacts with rax2, rho3 and tea4. Interacts with tea1 in the presence of tea4.

It localises to the cytoplasm. It is found in the cell cortex. The protein localises to the cell tip. Its function is as follows. Involved in controlling polarized cell growth. Required for interphase actin cable formation and microtubule organization. This chain is Formin-3 (for3), found in Schizosaccharomyces pombe (strain 972 / ATCC 24843) (Fission yeast).